The chain runs to 185 residues: MAARWRRILIVFVAAQVLCLVNTFEEEDVPEEWILLHVVQGQIGAGNYSYLRLNHEGKIVLQMQSLKGDADLYVSDMTLHPSFDEYELQSVTCGQDIVHVPAHFRRPVGIGIYGHPSHQESEFEMKVYYDRTVVQYPFGEASYNPEEMEANQKYSHSTEDESQDEESVFWTVLIGILKLILEILF.

The signal sequence occupies residues 1–23; sequence MAARWRRILIVFVAAQVLCLVNT. Asn47 carries N-linked (GlcNAc...) asparagine glycosylation.

It belongs to the UPF0669 family.

It is found in the secreted. The polypeptide is UPF0669 protein C6orf120 homolog (Gallus gallus (Chicken)).